We begin with the raw amino-acid sequence, 976 residues long: MEWLRNICSIPINFGLDKTNYIVTNIITFVFNLYGQRLLKTDSDKIIRLTECNHNHNIFHLYPLNLKECNQDIMNNTIIIENGLIDGLDLIVPWKSLFSDTITIKINNIDLNVIIKERDKYESMSLLEDTNSYLYESEKITDIDKNIVDILNEINLLLKKCFNNIDIEINLVTIHLKDALSVVVRDIKYSNQLLSCKNISVYSVSKSTDKYLDINKIELNCKLIGTKNLLIGDIFVDSRIVDALPIIYLTDGESHIDFQILIDKFNLDDICLTKLAVSINENKIIVRDFFKMEVNSAIIVSKSALLSVYHVITFDSKYKTCDFEQCICCNIIDIYSLINLTKEYSHTIKTLKNKFVSDDVKNYSLSINNLKIIIVGQDSIKIDVKKIIIGENIELLGLNVEYQNTFIVCERCIVNNSDDKNMISFHNISSNNKVLDLESEKIIYKKIIDNNNTKHTVTFCRLKSPDIIETINYVSELINTIKSKLIPNISGNARDNSVNNHEKVSDDNKESFVSINIYNSIGTLKYKSLVLDLFVDQSNICLTTKTATDTIINVSLNNIIIAKISLQTITKDFVSVNSLKIFIDPDILDQLIYFSGLLKPSNETIINNDYNQYIPPNVLEKIQEALSNTIISTSIEDLENSLQISTDGLFMNSCQNDYTNNLASPMIKILSDSVNNLRTAIINDYSNNVPNNNFKLNIDSIHIYLYDKLTIEKTKSFLFIVIKNSSFVLSHKKIIPNNPHIIIQNCNTEQSNIKTSYKLLIDGLAFIDNDSSDSNWKYLLKFKNKAINIHTILFNDTVKTYIRTSDFHANIREETLIRLFAFISNPNQFTTNNSKHTIFIEKFFMGEINGTINYLPIVFKNISFNSINLSIQDYQINIPIQSIRNVNGFDKLTKIIKTNIEKEINPKNVLQFVPNINIIEPYAMPITRIIALIGKYFKHDKNKQKLRKITRSIQNNMGVITGTISHNLQRIFDGLL.

This is an uncharacterized protein from Acanthamoeba polyphaga (Amoeba).